The following is a 307-amino-acid chain: 3-methyl-2-oxobutanoate hydroxymethyltransferase (307 aa).

Mg(2+)-binding residues include Asp61 and Asp100. 3-methyl-2-oxobutanoate contacts are provided by residues 61-62, Asp100, and Lys130; that span reads DS. Residue Glu132 coordinates Mg(2+). Glu199 acts as the Proton acceptor in catalysis.

The protein belongs to the PanB family. In terms of assembly, homodecamer; pentamer of dimers. Mg(2+) is required as a cofactor.

It localises to the cytoplasm. The catalysed reaction is 3-methyl-2-oxobutanoate + (6R)-5,10-methylene-5,6,7,8-tetrahydrofolate + H2O = 2-dehydropantoate + (6S)-5,6,7,8-tetrahydrofolate. It participates in cofactor biosynthesis; (R)-pantothenate biosynthesis; (R)-pantoate from 3-methyl-2-oxobutanoate: step 1/2. Its function is as follows. Catalyzes the reversible reaction in which hydroxymethyl group from 5,10-methylenetetrahydrofolate is transferred onto alpha-ketoisovalerate to form ketopantoate. The chain is 3-methyl-2-oxobutanoate hydroxymethyltransferase from Nitratidesulfovibrio vulgaris (strain ATCC 29579 / DSM 644 / CCUG 34227 / NCIMB 8303 / VKM B-1760 / Hildenborough) (Desulfovibrio vulgaris).